The primary structure comprises 213 residues: Orotate phosphoribosyltransferase (213 aa).

A 5-phospho-alpha-D-ribose 1-diphosphate-binding site is contributed by Lys-26. 34-35 (FF) provides a ligand contact to orotate. Residues 72-73 (YK), Arg-99, Lys-100, Lys-103, His-105, and 124-132 (DDVITAGTA) contribute to the 5-phospho-alpha-D-ribose 1-diphosphate site. The orotate site is built by Thr-128 and Arg-156.

Belongs to the purine/pyrimidine phosphoribosyltransferase family. PyrE subfamily. Homodimer. Requires Mg(2+) as cofactor.

The enzyme catalyses orotidine 5'-phosphate + diphosphate = orotate + 5-phospho-alpha-D-ribose 1-diphosphate. It functions in the pathway pyrimidine metabolism; UMP biosynthesis via de novo pathway; UMP from orotate: step 1/2. In terms of biological role, catalyzes the transfer of a ribosyl phosphate group from 5-phosphoribose 1-diphosphate to orotate, leading to the formation of orotidine monophosphate (OMP). This is Orotate phosphoribosyltransferase from Photorhabdus laumondii subsp. laumondii (strain DSM 15139 / CIP 105565 / TT01) (Photorhabdus luminescens subsp. laumondii).